Consider the following 1216-residue polypeptide: Probable cation-transporting ATPase 13A5 (1216 aa).

5 helical membrane-spanning segments follow: residues 33–53 (RALC…MFYW), 198–218 (LLVK…LTLW), 222–242 (GYIE…VLSV), 401–421 (FMVF…GVYM), and 433–453 (MALI…LTIG). Asp-486 (4-aspartylphosphate intermediate) is an active-site residue. N-linked (GlcNAc...) asparagine glycans are attached at residues Asn-650 and Asn-817. Mg(2+) is bound by residues Asp-848 and Asp-852. 6 helical membrane passes run 896–916 (ALVS…IQFI), 933–950 (YLLQ…TMSI), 971–991 (LLLS…CTFL), 1040–1060 (FEGT…AFIF), 1075–1095 (LFSL…FCDF), and 1113–1133 (VSIL…EDAV).

Belongs to the cation transport ATPase (P-type) (TC 3.A.3) family. Type V subfamily. As to expression, specifically expressed in brain and stomach.

Its subcellular location is the membrane. The catalysed reaction is ATP + H2O = ADP + phosphate + H(+). The polypeptide is Probable cation-transporting ATPase 13A5 (Atp13a5) (Mus musculus (Mouse)).